We begin with the raw amino-acid sequence, 291 residues long: MAGSKEIRSKIKSVENTRKITKAMEMVAASKMRKAQERMRMARPYAEKIRNVTAHLSHANSEYKHPFVVKREKVGNVGLIVVSSDKGLCGGLNTNVLRLSINQMKAWEGEGKKTIVSAIGNKGFTYLNRINADVKSHVTGLGDTPHLEKLIGTIKVMLDAYIAGEIDQLHICYTRFLNTMKQEAVIEQVLPLSDDKLETSATTAKGHWDYIYEPDANVVIDELMTRYIETIIYHAVTENMASEQSARMVAMKAASDNAKNVIGELKLVYNKARQAAITKEISEIVGGAAAV.

Belongs to the ATPase gamma chain family. In terms of assembly, F-type ATPases have 2 components, CF(1) - the catalytic core - and CF(0) - the membrane proton channel. CF(1) has five subunits: alpha(3), beta(3), gamma(1), delta(1), epsilon(1). CF(0) has three main subunits: a, b and c.

It localises to the cell inner membrane. In terms of biological role, produces ATP from ADP in the presence of a proton gradient across the membrane. The gamma chain is believed to be important in regulating ATPase activity and the flow of protons through the CF(0) complex. The chain is ATP synthase gamma chain from Methylobacillus flagellatus (strain ATCC 51484 / DSM 6875 / VKM B-1610 / KT).